Here is a 635-residue protein sequence, read N- to C-terminus: CCR4-NOT transcription complex subunit 10 (635 aa).

Thr-45 carries the phosphothreonine modification. Positions 131-165 (LVARLEALEKAMAALVATLQLQLLLATNQLNRAEA) form a coiled coil. 2 disordered regions span residues 396–416 (EERQ…QSAG) and 450–474 (SEDV…DNNF). Positions 456–470 (PEPKDPTQESWRHPQ) are enriched in basic and acidic residues.

This sequence belongs to the CNOT10 family. As to quaternary structure, component of the CCR4-NOT complex. CNOT10 and CNOT11 form a subcomplex docked to the CNOT1 scaffold.

It is found in the cytoplasm. It localises to the nucleus. Functionally, component of the CCR4-NOT complex which is one of the major cellular mRNA deadenylases and is linked to various cellular processes including bulk mRNA degradation, miRNA-mediated repression, translational repression during translational initiation and general transcription regulation. Additional complex functions may be a consequence of its influence on mRNA expression. Is not required for association of CNOT7 to the CCR4-NOT complex. The chain is CCR4-NOT transcription complex subunit 10 (Not10) from Drosophila melanogaster (Fruit fly).